Reading from the N-terminus, the 446-residue chain is Bifunctional protein GlmU (446 aa).

The tract at residues 1–228 (MTKTAAVILA…AEELLGVNSR (228 aa)) is pyrophosphorylase. Residues 9–12 (LAAG), lysine 23, glutamine 72, 77–78 (GT), 100–102 (YGD), glycine 140, glutamate 154, asparagine 169, and asparagine 226 each bind UDP-N-acetyl-alpha-D-glucosamine. Aspartate 102 serves as a coordination point for Mg(2+). Asparagine 226 contributes to the Mg(2+) binding site. The segment at 229-249 (SELAAAEAVIQGRLREKAMEG) is linker. The tract at residues 250-446 (GATLTAPETV…AHMRRLTGKN (197 aa)) is N-acetyltransferase. The UDP-N-acetyl-alpha-D-glucosamine site is built by arginine 315 and lysine 333. Histidine 345 acts as the Proton acceptor in catalysis. 2 residues coordinate UDP-N-acetyl-alpha-D-glucosamine: tyrosine 348 and asparagine 359. Acetyl-CoA-binding positions include alanine 362, 368–369 (NY), serine 387, alanine 405, and arginine 422.

The protein in the N-terminal section; belongs to the N-acetylglucosamine-1-phosphate uridyltransferase family. In the C-terminal section; belongs to the transferase hexapeptide repeat family. Homotrimer. Mg(2+) serves as cofactor.

It localises to the cytoplasm. The enzyme catalyses alpha-D-glucosamine 1-phosphate + acetyl-CoA = N-acetyl-alpha-D-glucosamine 1-phosphate + CoA + H(+). The catalysed reaction is N-acetyl-alpha-D-glucosamine 1-phosphate + UTP + H(+) = UDP-N-acetyl-alpha-D-glucosamine + diphosphate. The protein operates within nucleotide-sugar biosynthesis; UDP-N-acetyl-alpha-D-glucosamine biosynthesis; N-acetyl-alpha-D-glucosamine 1-phosphate from alpha-D-glucosamine 6-phosphate (route II): step 2/2. Its pathway is nucleotide-sugar biosynthesis; UDP-N-acetyl-alpha-D-glucosamine biosynthesis; UDP-N-acetyl-alpha-D-glucosamine from N-acetyl-alpha-D-glucosamine 1-phosphate: step 1/1. It participates in bacterial outer membrane biogenesis; LPS lipid A biosynthesis. In terms of biological role, catalyzes the last two sequential reactions in the de novo biosynthetic pathway for UDP-N-acetylglucosamine (UDP-GlcNAc). The C-terminal domain catalyzes the transfer of acetyl group from acetyl coenzyme A to glucosamine-1-phosphate (GlcN-1-P) to produce N-acetylglucosamine-1-phosphate (GlcNAc-1-P), which is converted into UDP-GlcNAc by the transfer of uridine 5-monophosphate (from uridine 5-triphosphate), a reaction catalyzed by the N-terminal domain. The chain is Bifunctional protein GlmU from Rhodospirillum rubrum (strain ATCC 11170 / ATH 1.1.1 / DSM 467 / LMG 4362 / NCIMB 8255 / S1).